Here is an 82-residue protein sequence, read N- to C-terminus: Diphthamide biosynthesis protein 3 (82 aa).

The DPH-type MB domain occupies 8–64 (IYDEVEIEDMTYDPALQTYSYPCPCGDKFEIALADLQDGQDIAVCPSCSLMVRVIFE). The Fe cation site is built by cysteine 30, cysteine 32, cysteine 52, and cysteine 55.

This sequence belongs to the DPH3 family. Component of the 2-(3-amino-3-carboxypropyl)histidine synthase complex composed of dph-1, dph-2, dph-3 and a NADH-dependent reductase, predominantly cbr-1. Fe(2+) serves as cofactor.

The protein localises to the cytoplasm. The protein resides in the nucleus. It carries out the reaction [3Fe-4S](1+)-[protein] + Fe(2+)-[Dph3] = [3Fe-4S](0)-[protein] + Fe(3+)-[Dph3]. It catalyses the reaction 2 [3Fe-4S](0)-[protein] + 2 Fe(2+)-[Dph3] + NADH = 2 [4Fe-4S](1+)-[protein] + 2 [Dph3] + NAD(+) + H(+). It functions in the pathway protein modification; peptidyl-diphthamide biosynthesis. In terms of biological role, required for the first step of diphthamide biosynthesis, a post-translational modification of histidine which occurs in elongation factor 2. Dph-1 and dph-2 transfer a 3-amino-3-carboxypropyl (ACP) group from S-adenosyl-L-methionine (SAM) to a histidine residue, the reaction is assisted by a reduction system comprising dph-3 and a NADH-dependent reductase, predominantly cbr-1. Acts as an electron donor to reduce the Fe-S cluster in dph1-dph2 keeping the [4Fe-4S] clusters in the active and reduced state. Restores iron to dph-1-dph-2 iron-sulfur clusters which have degraded from [4Fe-4S] to [3Fe-4S] by donating an iron atom to reform [4Fe-4S] clusters, in a manner dependent on the presence of elongation factor 2 and SAM. Associates with the elongator complex and is required for tRNA Wobble base modifications mediated by the elongator complex. The elongator complex is required for multiple tRNA modifications, including mcm5U (5-methoxycarbonylmethyl uridine), mcm5s 2U (5-methoxycarbonylmethyl-2-thiouridine), and ncm5U (5-carbamoylmethyl uridine). This chain is Diphthamide biosynthesis protein 3 (dph-3), found in Neurospora crassa (strain ATCC 24698 / 74-OR23-1A / CBS 708.71 / DSM 1257 / FGSC 987).